The following is a 263-amino-acid chain: uncharacterized protein (263 aa).

The protein to B.subtilis soj.

This is an uncharacterized protein from Pseudomonas putida (strain ATCC 47054 / DSM 6125 / CFBP 8728 / NCIMB 11950 / KT2440).